The sequence spans 597 residues: Kelch-like protein 21 (597 aa).

The BTB domain maps to Leu35 to Gly103. Residues Cys138–Glu239 form the BACK domain. 6 Kelch repeats span residues Ile287–Asn335, Asp336–Gly382, Leu384–Gly422, Leu424–Pro463, Lys464–Gly512, and Lys513–Arg560. The interval Gly570–His597 is disordered. Residues Pro587–His597 are compositionally biased toward pro residues.

In terms of assembly, component of the BCR(KLHL21) E3 ubiquitin ligase complex, at least composed of CUL3, KLHL21 and RBX1.

The protein localises to the cytoplasm. It localises to the cytoskeleton. Its subcellular location is the spindle. It functions in the pathway protein modification; protein ubiquitination. Its function is as follows. Substrate-specific adapter of a BCR (BTB-CUL3-RBX1) E3 ubiquitin-protein ligase complex required for efficient chromosome alignment and cytokinesis. The BCR(KLHL21) E3 ubiquitin ligase complex regulates localization of the chromosomal passenger complex (CPC) from chromosomes to the spindle midzone in anaphase and mediates the ubiquitination of AURKB. Ubiquitination of AURKB by BCR(KLHL21) E3 ubiquitin ligase complex may not lead to its degradation by the proteasome. The chain is Kelch-like protein 21 (KLHL21) from Bos taurus (Bovine).